The chain runs to 305 residues: tRNA uridine(34) hydroxylase (305 aa).

The Rhodanese domain maps to 125–219 (ADENTVVVDK…YLEEVPREQS (95 aa)). Cysteine 179 (cysteine persulfide intermediate) is an active-site residue.

It belongs to the TrhO family.

The catalysed reaction is uridine(34) in tRNA + AH2 + O2 = 5-hydroxyuridine(34) in tRNA + A + H2O. Functionally, catalyzes oxygen-dependent 5-hydroxyuridine (ho5U) modification at position 34 in tRNAs. This Brucella abortus (strain S19) protein is tRNA uridine(34) hydroxylase.